The sequence spans 60 residues: Large ribosomal subunit protein uL29 (60 aa).

This sequence belongs to the universal ribosomal protein uL29 family.

The protein is Large ribosomal subunit protein uL29 of Fusobacterium nucleatum subsp. nucleatum (strain ATCC 25586 / DSM 15643 / BCRC 10681 / CIP 101130 / JCM 8532 / KCTC 2640 / LMG 13131 / VPI 4355).